The primary structure comprises 431 residues: Glucose-6-phosphate isomerase (431 aa).

Residue Glu-284 is the Proton donor of the active site. Residues His-305 and Lys-420 contribute to the active site.

Belongs to the GPI family.

It is found in the cytoplasm. The enzyme catalyses alpha-D-glucose 6-phosphate = beta-D-fructose 6-phosphate. It functions in the pathway carbohydrate biosynthesis; gluconeogenesis. It participates in carbohydrate degradation; glycolysis; D-glyceraldehyde 3-phosphate and glycerone phosphate from D-glucose: step 2/4. Its function is as follows. Catalyzes the reversible isomerization of glucose-6-phosphate to fructose-6-phosphate. The protein is Glucose-6-phosphate isomerase of Mycoplasma genitalium (strain ATCC 33530 / DSM 19775 / NCTC 10195 / G37) (Mycoplasmoides genitalium).